The following is a 358-amino-acid chain: MQNKIKQLKNYAVYDDIEGFLINKDIRSSSGNSNYMMPSSTRRVSNTRKNYEGDIKQFFSVIKGKDVKSLVPDDLVVSKSELSNYVKYLQEKGLVNNSINRKMTSLKMLYTYLEHDYKDYIDLSVFNTVERLKTVTKNWDKTTQTEAERIAQDMYINERQKPLMKKLFVKFAIRTSFRVSAILRVRWKDIQLDESTGHYIVTVIDKGSQVVSTGINQVFYEELLQLKEEDDSETELVFQGLSEQSLRHSLKRSKKRLGIPPERELVLHSFKGVGIDYVYENSGHDLLAAKEQGNHKNTLTTERYMSRKINIANSAGVTMDEKIDLNPLYEATQEDFISFFENADLVTLKKFIKHVNER.

Residues 23 to 114 (NKDIRSSSGN…SLKMLYTYLE (92 aa)) enclose the Core-binding (CB) domain. A Tyr recombinase domain is found at 137 to 319 (KNWDKTTQTE…NIANSAGVTM (183 aa)). Active-site residues include Arg178, Lys206, His268, and His295. The O-(3'-phospho-DNA)-tyrosine intermediate role is filled by Tyr304.

This sequence belongs to the 'phage' integrase family.

Probable recombinase that does not seem to have a role in chromosome dimer resolution per se but rather may have some facilitative role during chromosome partitioning in general. The polypeptide is SPbeta prophage-derived probable integrase/recombinase YopP (yopP) (Bacillus subtilis (strain 168)).